The following is a 265-amino-acid chain: MKAVVLTLAVLFLTGSQARHFWQQDDPQSPWDRVKDFATVYVDAIKDSGRDYVAQFEASALGKHLNLKLLDNWDSLGSTFTKVREQLGPVTQEFWDNLEKETEALRQEMSKDLEEVKKKVQPYLDDFQNKWQEEMETYRQKMAPLGAEFREGARQKVQELQEKLSPLAEELRDRLRAHVEALRQHVAPYSDDLRQRMAARFEALKEGGGSLAEYQAKAQEQLKALGEKAKPALEDLRQGLLPVLENLKVSILAAIDEASKKLNAQ.

The N-terminal stretch at 1–18 (MKAVVLTLAVLFLTGSQA) is a signal peptide. 2 consecutive repeat copies span residues 67 to 88 (LKLL…EQLG) and 89 to 110 (PVTQ…QEMS). The interval 67 to 265 (LKLLDNWDSL…DEASKKLNAQ (199 aa)) is 10 X approximate tandem repeats. Met109 is subject to Methionine sulfoxide. Residues 111–121 (KDLEEVKKKVQ) form a 3; half-length repeat. Repeat copies occupy residues 122–142 (PYLD…RQKM), 144–165 (PLGA…EKLS), 166–187 (PLAE…QHVA), 188–209 (PYSD…EGGG), and 210–230 (SLAE…EKAK). Position 135 is a methionine sulfoxide (Met135). The stretch at 231–241 (PALEDLRQGLL) is one 9; half-length repeat. Residues 242-265 (PVLENLKVSILAAIDEASKKLNAQ) form repeat 10.

Belongs to the apolipoprotein A1/A4/E family. In terms of assembly, homodimer. Interacts with APOA1BP and CLU. Component of a sperm activating protein complex (SPAP), consisting of APOA1, an immunoglobulin heavy chain, an immunoglobulin light chain and albumin. Interacts with NDRG1. Interacts with SCGB3A2. Interacts with NAXE and YJEFN3. Post-translationally, glycosylated. In terms of processing, palmitoylated. Phosphorylation sites are present in the extracellular medium. As to expression, major protein of plasma HDL, also found in chylomicrons. Synthesized predominantly in the intestine and the liver.

The protein localises to the secreted. Functionally, participates in the reverse transport of cholesterol from tissues to the liver for excretion by promoting cholesterol efflux from tissues and by acting as a cofactor for the lecithin cholesterol acyltransferase (LCAT). As part of the SPAP complex, activates spermatozoa motility. The polypeptide is Apolipoprotein A-I (APOA1) (Sus scrofa (Pig)).